The following is a 103-amino-acid chain: MKQFENVNVELEGNSYFDGAVTSRTVNFPDGSRKTLGFMLPGEYEFGTAAAELMEITSGELDVKLPGSDEWLSIKGGESFNVPADSKFQVKVKRVTDYCCSYL.

This sequence belongs to the nucleoside phosphorylase PpnP family.

The catalysed reaction is a purine D-ribonucleoside + phosphate = a purine nucleobase + alpha-D-ribose 1-phosphate. The enzyme catalyses adenosine + phosphate = alpha-D-ribose 1-phosphate + adenine. It carries out the reaction cytidine + phosphate = cytosine + alpha-D-ribose 1-phosphate. It catalyses the reaction guanosine + phosphate = alpha-D-ribose 1-phosphate + guanine. The catalysed reaction is inosine + phosphate = alpha-D-ribose 1-phosphate + hypoxanthine. The enzyme catalyses thymidine + phosphate = 2-deoxy-alpha-D-ribose 1-phosphate + thymine. It carries out the reaction uridine + phosphate = alpha-D-ribose 1-phosphate + uracil. It catalyses the reaction xanthosine + phosphate = alpha-D-ribose 1-phosphate + xanthine. Functionally, catalyzes the phosphorolysis of diverse nucleosides, yielding D-ribose 1-phosphate and the respective free bases. Can use uridine, adenosine, guanosine, cytidine, thymidine, inosine and xanthosine as substrates. Also catalyzes the reverse reactions. In Sulfurovum sp. (strain NBC37-1), this protein is Pyrimidine/purine nucleoside phosphorylase.